Here is an 86-residue protein sequence, read N- to C-terminus: MKKLLIVSVKAYQKYISPLSPPSCRYKPTCSAYMLTAIEKHGTKGILMGIARILRCHPFVAGGVDPVPEDFSLMRNKNTSKNAEKA.

It belongs to the UPF0161 family.

The protein localises to the cell membrane. Could be involved in insertion of integral membrane proteins into the membrane. The protein is Putative membrane protein insertion efficiency factor of Streptococcus pyogenes serotype M1.